The primary structure comprises 454 residues: tRNA modification GTPase MnmE (454 aa).

3 residues coordinate (6S)-5-formyl-5,6,7,8-tetrahydrofolate: Arg23, Glu80, and Lys120. In terms of domain architecture, TrmE-type G spans 216 to 377 (GMKVVIAGRP…LRNNLKQSMG (162 aa)). Position 226 (Asn226) interacts with K(+). Residues 226–231 (NAGKSS), 245–251 (TDIAGTT), 270–273 (DTAG), 335–338 (NKAD), and 358–360 (SAR) contribute to the GTP site. Mg(2+) is bound at residue Ser230. Residues Thr245, Ile247, and Thr250 each coordinate K(+). Thr251 is a binding site for Mg(2+). Residue Lys454 participates in (6S)-5-formyl-5,6,7,8-tetrahydrofolate binding.

The protein belongs to the TRAFAC class TrmE-Era-EngA-EngB-Septin-like GTPase superfamily. TrmE GTPase family. As to quaternary structure, homodimer. Heterotetramer of two MnmE and two MnmG subunits. K(+) is required as a cofactor.

It localises to the cytoplasm. Its function is as follows. Exhibits a very high intrinsic GTPase hydrolysis rate. Involved in the addition of a carboxymethylaminomethyl (cmnm) group at the wobble position (U34) of certain tRNAs, forming tRNA-cmnm(5)s(2)U34. This Salmonella paratyphi A (strain AKU_12601) protein is tRNA modification GTPase MnmE.